The primary structure comprises 145 residues: Cell wall synthesis protein CwsA (145 aa).

A helical transmembrane segment spans residues 104–124; it reads WIFAGIAAAILAGGAVAFSIV.

Belongs to the CwsA family.

The protein resides in the cell membrane. Its function is as follows. Required for regulated cell division, cell wall synthesis and the maintenance of cell shape. The protein is Cell wall synthesis protein CwsA of Mycobacterium bovis (strain ATCC BAA-935 / AF2122/97).